Consider the following 354-residue polypeptide: 4-hydroxy-2-oxovalerate aldolase 5 (354 aa).

One can recognise a Pyruvate carboxyltransferase domain in the interval 11–263 (VTVHDMCLRD…ETGCDLFKLM (253 aa)). A substrate-binding site is contributed by 19 to 20 (RD). Position 20 (Asp-20) interacts with Mn(2+). His-23 serves as the catalytic Proton acceptor. Residues Ser-173 and His-202 each coordinate substrate. The Mn(2+) site is built by His-202 and His-204. Residue Tyr-293 participates in substrate binding.

It belongs to the 4-hydroxy-2-oxovalerate aldolase family.

It carries out the reaction (S)-4-hydroxy-2-oxopentanoate = acetaldehyde + pyruvate. This is 4-hydroxy-2-oxovalerate aldolase 5 from Dechloromonas aromatica (strain RCB).